The primary structure comprises 254 residues: GTP cyclohydrolase III (254 aa).

The protein belongs to the archaeal-type GTP cyclohydrolase family.

The catalysed reaction is GTP + 3 H2O = 2-amino-5-formylamino-6-(5-phospho-D-ribosylamino)pyrimidin-4(3H)-one + 2 phosphate + 2 H(+). Its function is as follows. Catalyzes the formation of 2-amino-5-formylamino-6-ribofuranosylamino-4(3H)-pyrimidinone ribonucleotide monophosphate and inorganic phosphate from GTP. Also has an independent pyrophosphate phosphohydrolase activity. In Methanobrevibacter smithii (strain ATCC 35061 / DSM 861 / OCM 144 / PS), this protein is GTP cyclohydrolase III.